Consider the following 485-residue polypeptide: Adenosylhomocysteinase (485 aa).

Substrate is bound by residues T64, D139, and E205. T206–T208 serves as a coordination point for NAD(+). The substrate site is built by K235 and D239. Residues N240, G269–G274, E292, N327, I348–H350, and N397 contribute to the NAD(+) site.

Belongs to the adenosylhomocysteinase family. In terms of assembly, homotetramer. It depends on NAD(+) as a cofactor.

It carries out the reaction S-adenosyl-L-homocysteine + H2O = L-homocysteine + adenosine. The protein operates within amino-acid biosynthesis; L-homocysteine biosynthesis; L-homocysteine from S-adenosyl-L-homocysteine: step 1/1. In terms of biological role, adenosylhomocysteine is a competitive inhibitor of S-adenosyl-L-methionine-dependent methyl transferase reactions; therefore adenosylhomocysteinase may play a key role in the control of methylations via regulation of the intracellular concentration of adenosylhomocysteine. The sequence is that of Adenosylhomocysteinase (SAHH) from Catharanthus roseus (Madagascar periwinkle).